The chain runs to 296 residues: Outer surface protein B (296 aa).

Positions Met1–Gly15 are cleaved as a signal peptide. A lipid anchor (N-palmitoyl cysteine) is attached at Cys16. Cys16 carries S-diacylglycerol cysteine lipidation. Residues Gly25–Ala51 are disordered. Over residues Lys28 to Lys39 the composition is skewed to basic and acidic residues.

It localises to the cell outer membrane. This chain is Outer surface protein B (ospB), found in Borreliella burgdorferi (strain ATCC 35210 / DSM 4680 / CIP 102532 / B31) (Borrelia burgdorferi).